The chain runs to 105 residues: Met repressor (105 aa).

It belongs to the MetJ family. In terms of assembly, homodimer.

The protein resides in the cytoplasm. Functionally, this regulatory protein, when combined with SAM (S-adenosylmethionine) represses the expression of the methionine regulon and of enzymes involved in SAM synthesis. The protein is Met repressor of Haemophilus influenzae (strain 86-028NP).